The primary structure comprises 540 residues: Anti-sigma-I factor RsgI7 (540 aa).

The region spanning 1–48 (MRAMVVDMNDKYAVVVNKEGQYIKIKRKAEHRLGYQVELPDRVIGFER) is the RsgI N-terminal anti-sigma domain. The Cytoplasmic portion of the chain corresponds to 1–50 (MRAMVVDMNDKYAVVVNKEGQYIKIKRKAEHRLGYQVELPDRVIGFERRT). Residues 51 to 73 (LLKVVSVAAALLIVSSISFAVYS) traverse the membrane as a helical segment. At 74–540 (YNLPYSYVNV…PGKEILKKRC (467 aa)) the chain is on the extracellular side. Composition is skewed to basic and acidic residues over residues 238–256 (DIKK…KKVN), 319–329 (SGIDKGNKDSK), 338–351 (NDVK…KTNS), 359–370 (VSKDNKNDKADG), and 398–419 (SKDD…EDNK). Disordered regions lie at residues 238–429 (DIKK…CPQY) and 481–540 (QEEQ…KKRC). Positions 451 to 501 (KEDMTKQNDEWFKKMQEEQKKQYDEWLKKMQEEQKKQHDEWVKKMEEMKNT) form a coiled coil.

As to quaternary structure, interacts (via RsgI N-terminal anti-sigma domain) with SigI7.

The protein localises to the cell membrane. Anti-sigma factor for SigI7. Negatively regulates SigI7 activity through direct interaction. The protein is Anti-sigma-I factor RsgI7 of Acetivibrio thermocellus (strain ATCC 27405 / DSM 1237 / JCM 9322 / NBRC 103400 / NCIMB 10682 / NRRL B-4536 / VPI 7372) (Clostridium thermocellum).